A 492-amino-acid chain; its full sequence is N-succinylglutamate 5-semialdehyde dehydrogenase (492 aa).

Position 220–225 (220–225 (GSANTG)) interacts with NAD(+). Catalysis depends on residues E243 and C277.

This sequence belongs to the aldehyde dehydrogenase family. AstD subfamily.

It catalyses the reaction N-succinyl-L-glutamate 5-semialdehyde + NAD(+) + H2O = N-succinyl-L-glutamate + NADH + 2 H(+). Its pathway is amino-acid degradation; L-arginine degradation via AST pathway; L-glutamate and succinate from L-arginine: step 4/5. Functionally, catalyzes the NAD-dependent reduction of succinylglutamate semialdehyde into succinylglutamate. This is N-succinylglutamate 5-semialdehyde dehydrogenase from Shigella flexneri serotype 5b (strain 8401).